A 348-amino-acid chain; its full sequence is MNHYIRAIGSMLILVYSMLIAFLFIDKVFVNIIFFQGMFYTQIFGIPVFLFLNLLIVLLCIIVGSVLAYKINQQNDWIISQIERSIEGQTVGINDQNIELYTETIDIYHTLVPLNQELHRLRMKTQNLTNENYNINDVKVKKIIEDERQRLARELHDSVSQQLFAASMMLSAIKESKLEPPLNQQIPILEKMVQDSQLEMRALLLHLRPIGLKDKSLGEGIKDLVIDLQKKVPMKVVHEIQDFEVPKGIEDHLFRITQEAISNTLRHSNGTKVTVELFNQEDYLLLRIQDNGKGFNVDEKFEQSYGLKNMRERALEIGATFHIVSLPDSGTRIEVKAPLNKEENSSGD.

2 helical membrane-spanning segments follow: residues 13 to 33 and 43 to 63; these read ILVY…VNII and IFGI…CIIV. The 192-residue stretch at 150–341 folds into the Histidine kinase domain; sequence RLARELHDSV…RIEVKAPLNK (192 aa).

It is found in the cell membrane. It catalyses the reaction ATP + protein L-histidine = ADP + protein N-phospho-L-histidine.. Member of the two-component regulatory system VraS/VraR involved in the control of the cell wall peptidoglycan biosynthesis. Probably activates VraR by phosphorylation. The chain is Sensor protein VraS (vraS) from Staphylococcus epidermidis (strain ATCC 35984 / DSM 28319 / BCRC 17069 / CCUG 31568 / BM 3577 / RP62A).